A 371-amino-acid polypeptide reads, in one-letter code: Spermatogenic leucine zipper protein 1 (371 aa).

Coiled-coil stretches lie at residues 96-148 and 177-289; these read EVSE…TVQD and FPHI…QKEE. A Phosphoserine modification is found at serine 98. The interval 110 to 120 is helix-loop-helix motif; the sequence is INKELVKKLLA. A basic motif region spans residues 121 to 188; it reads SLDLGKKENA…HIQEENIRLR (68 aa). Serine 202 carries the post-translational modification Phosphoserine. Residues 223 to 240 show a composition bias toward polar residues; the sequence is KTLKNNGTHSPTQTNNES. A disordered region spans residues 223 to 246; the sequence is KTLKNNGTHSPTQTNNESAKQELE. The leucine-zipper stretch occupies residues 245–266; it reads LEEQVKRLKEDTYSLHLIATLL.

Phosphorylated by MAPK1/ERK2 and MAPK3/ERK1.

It localises to the cytoplasm. The protein localises to the nucleus. Transcription factor that binds to the DNA sequence 5'-CANNTG-3'(E box) and the G-box motif. May play an important role in the regulation of cell proliferation and differentiation during spermatogenesis. This chain is Spermatogenic leucine zipper protein 1 (SPZ1), found in Bos taurus (Bovine).